The following is a 108-amino-acid chain: Small ribosomal subunit protein mS33 (108 aa).

A disordered region spans residues 84 to 108 (LRARDKGAPKKKRTAPSAADAKKKK).

The protein belongs to the mitochondrion-specific ribosomal protein mS33 family. In terms of assembly, component of the mitochondrial small ribosomal subunit (mt-SSU). Mature N.crassa 74S mitochondrial ribosomes consist of a small (37S) and a large (54S) subunit. The 37S small subunit contains a 16S ribosomal RNA (16S mt-rRNA) and 32 different proteins. The 54S large subunit contains a 23S rRNA (23S mt-rRNA) and 42 different proteins.

It is found in the mitochondrion. Component of the mitochondrial ribosome (mitoribosome), a dedicated translation machinery responsible for the synthesis of mitochondrial genome-encoded proteins, including at least some of the essential transmembrane subunits of the mitochondrial respiratory chain. The mitoribosomes are attached to the mitochondrial inner membrane and translation products are cotranslationally integrated into the membrane. The chain is Small ribosomal subunit protein mS33 (rsm27) from Neurospora crassa (strain ATCC 24698 / 74-OR23-1A / CBS 708.71 / DSM 1257 / FGSC 987).